Reading from the N-terminus, the 74-residue chain is DNA-directed RNA polymerase subunit omega (74 aa).

The protein belongs to the RNA polymerase subunit omega family. In terms of assembly, the RNAP catalytic core consists of 2 alpha, 1 beta, 1 beta' and 1 omega subunit. When a sigma factor is associated with the core the holoenzyme is formed, which can initiate transcription.

It catalyses the reaction RNA(n) + a ribonucleoside 5'-triphosphate = RNA(n+1) + diphosphate. In terms of biological role, promotes RNA polymerase assembly. Latches the N- and C-terminal regions of the beta' subunit thereby facilitating its interaction with the beta and alpha subunits. This chain is DNA-directed RNA polymerase subunit omega, found in Hydrogenovibrio crunogenus (strain DSM 25203 / XCL-2) (Thiomicrospira crunogena).